The sequence spans 456 residues: PTS system sucrose-specific EIIBC component (456 aa).

In terms of domain architecture, PTS EIIB type-1 spans 4–87; sequence EQISRSLLPL…IQAAGISESS (84 aa). Cys-26 functions as the Phosphocysteine intermediate; for EIIB activity in the catalytic mechanism. The 350-residue stretch at 107–456 folds into the PTS EIIC type-1 domain; it reads RLLSNIFVPI…LTLKYKTDAE (350 aa). The next 10 membrane-spanning stretches (helical) occupy residues 112 to 132, 144 to 164, 181 to 201, 209 to 229, 247 to 267, 288 to 308, 329 to 349, 360 to 380, 388 to 408, and 428 to 448; these read IFVPIIPAIVASGLLMGLLGM, ALYIMLDMCSSAAFIILPILI, TLGGILTHPALTNAWGVAAGF, IEVAMIGYQGTVFPVLLAVWF, LILTPFLTVIISGFIALLLIG, AGWLAGLLFGGLYSVIVITGI, FLLPIWAMANVAQGGACFAVW, ITLPSAFSAMLGITEAAIFGI, FIAALVGGAAGGAWVVSMHVY, and LLNYIIGMAIAFAVAFALSLT.

It is found in the cell inner membrane. It carries out the reaction N(pros)-phospho-L-histidyl-[protein](out) + sucrose = sucrose 6(G)-phosphate(in) + L-histidyl-[protein]. Functionally, the phosphoenolpyruvate-dependent sugar phosphotransferase system (sugar PTS), a major carbohydrate active transport system, catalyzes the phosphorylation of incoming sugar substrates concomitantly with their translocation across the cell membrane. This system is involved in sucrose transport. This Klebsiella pneumoniae protein is PTS system sucrose-specific EIIBC component.